The chain runs to 117 residues: Large ribosomal subunit protein bL17 (117 aa).

This sequence belongs to the bacterial ribosomal protein bL17 family. As to quaternary structure, part of the 50S ribosomal subunit. Contacts protein L32.

This Campylobacter jejuni subsp. jejuni serotype O:6 (strain 81116 / NCTC 11828) protein is Large ribosomal subunit protein bL17.